Consider the following 234-residue polypeptide: Transcription factor UDT1 (234 aa).

The interval 1-51 (MPRRARARGGGGGGGEEVKVEDDFIDSVLNFGGGGGGEEDGDDGEEEQQQQ) is disordered. Acidic residues predominate over residues 37–48 (GEEDGDDGEEEQ). The tract at residues 61 to 74 (EFKSKNLEAERRRR) is basic motif; degenerate. Residues 61 to 110 (EFKSKNLEAERRRRGRLNGNIFALRAVVPKITKMSKEATLSDAIEHIKNL) enclose the bHLH domain. Residues 75–110 (GRLNGNIFALRAVVPKITKMSKEATLSDAIEHIKNL) form a helix-loop-helix motif region.

The protein belongs to the bHLH protein family.

The protein localises to the nucleus. In terms of biological role, transcription factor that plays a crucial role in tapetum development. Required for male fertility and pollen differentiation within the developing anther. Plays a major role in maintaining tapetum development, starting in early meiosis. Required for pollen mother cell meiosis. May regulate the anther-specific cysteine protease CP1 and lipid-transfer proteins C4 and C6. Required for anther development. Functions in parallel with GAMYB to regulate early anther development. Functions upstream of the transcription factor TDR and may positively regulate its transcription. The chain is Transcription factor UDT1 from Oryza sativa subsp. japonica (Rice).